The primary structure comprises 335 residues: UPF0353 protein NFA_34780 (335 aa).

The next 2 helical transmembrane spans lie at 8–28 and 61–81; these read ALIWLGFLAVVALIALGYVLV and IALMLVGLVFLTIAAAGPTSV. Positions 90-295 constitute a VWFA domain; sequence TVVLVMDVSL…EELTAVYDTL (206 aa). The helical transmembrane segment at 310–330 threads the bilayer; that stretch reads RPWLLLGMLVVAAGIVTGLLY.

Belongs to the UPF0353 family.

The protein resides in the cell membrane. The polypeptide is UPF0353 protein NFA_34780 (Nocardia farcinica (strain IFM 10152)).